We begin with the raw amino-acid sequence, 246 residues long: NAD-dependent protein deacylase (246 aa).

The region spanning Met-1–Ala-237 is the Deacetylase sirtuin-type domain. Gly-13 to Trp-32 is a binding site for NAD(+). Substrate is bound by residues Tyr-57 and Arg-60. Residue Gln-94–Asp-97 coordinates NAD(+). His-112 acts as the Proton acceptor in catalysis. Residues Cys-120 and Cys-139 each contribute to the Zn(2+) site. Residues Gly-179–Ser-181, Asn-205–Glu-207, and Ala-223 each bind NAD(+).

Belongs to the sirtuin family. Class III subfamily. Zn(2+) serves as cofactor.

It is found in the cytoplasm. It carries out the reaction N(6)-acetyl-L-lysyl-[protein] + NAD(+) + H2O = 2''-O-acetyl-ADP-D-ribose + nicotinamide + L-lysyl-[protein]. The enzyme catalyses N(6)-succinyl-L-lysyl-[protein] + NAD(+) + H2O = 2''-O-succinyl-ADP-D-ribose + nicotinamide + L-lysyl-[protein]. In terms of biological role, NAD-dependent lysine deacetylase and desuccinylase that specifically removes acetyl and succinyl groups on target proteins. Modulates the activities of several proteins which are inactive in their acylated form. The sequence is that of NAD-dependent protein deacylase from Vibrio cholerae serotype O1 (strain ATCC 39315 / El Tor Inaba N16961).